Reading from the N-terminus, the 92-residue chain is Small ribosomal subunit protein uS19 (92 aa).

The protein belongs to the universal ribosomal protein uS19 family.

Functionally, protein S19 forms a complex with S13 that binds strongly to the 16S ribosomal RNA. This is Small ribosomal subunit protein uS19 from Polaromonas sp. (strain JS666 / ATCC BAA-500).